Here is a 206-residue protein sequence, read N- to C-terminus: Probable GTP-binding protein EngB (206 aa).

The EngB-type G domain occupies Ser-25 to Pro-198. Mg(2+) is bound by residues Ser-40 and Thr-62.

It belongs to the TRAFAC class TrmE-Era-EngA-EngB-Septin-like GTPase superfamily. EngB GTPase family. The cofactor is Mg(2+).

Necessary for normal cell division and for the maintenance of normal septation. The chain is Probable GTP-binding protein EngB from Thiobacillus denitrificans (strain ATCC 25259 / T1).